Here is a 199-residue protein sequence, read N- to C-terminus: Pyridoxine/pyridoxamine 5'-phosphate oxidase (199 aa).

FMN-binding positions include 44-49 (RTVLLK), 59-60 (YT), lysine 66, and glutamine 91. Lysine 49 lines the substrate pocket. Substrate is bound by residues tyrosine 109, arginine 113, and serine 117. Residues 126-127 (QS) and tryptophan 171 contribute to the FMN site. 177–179 (RLH) serves as a coordination point for substrate. Arginine 181 lines the FMN pocket.

The protein belongs to the pyridoxamine 5'-phosphate oxidase family. As to quaternary structure, homodimer. The cofactor is FMN.

It catalyses the reaction pyridoxamine 5'-phosphate + O2 + H2O = pyridoxal 5'-phosphate + H2O2 + NH4(+). The catalysed reaction is pyridoxine 5'-phosphate + O2 = pyridoxal 5'-phosphate + H2O2. Its pathway is cofactor metabolism; pyridoxal 5'-phosphate salvage; pyridoxal 5'-phosphate from pyridoxamine 5'-phosphate: step 1/1. The protein operates within cofactor metabolism; pyridoxal 5'-phosphate salvage; pyridoxal 5'-phosphate from pyridoxine 5'-phosphate: step 1/1. Catalyzes the oxidation of either pyridoxine 5'-phosphate (PNP) or pyridoxamine 5'-phosphate (PMP) into pyridoxal 5'-phosphate (PLP). The polypeptide is Pyridoxine/pyridoxamine 5'-phosphate oxidase (Xanthomonas axonopodis pv. citri (strain 306)).